Consider the following 457-residue polypeptide: RuvB-like helicase 1 (457 aa).

G72–T79 is an ATP binding site.

The protein belongs to the RuvB family. In terms of assembly, may form heterododecamers with RVB2. Component of the SWR1 chromatin remodeling complex, the INO80 chromatin remodeling complex, and of the R2TP complex.

The protein resides in the nucleus. The catalysed reaction is ATP + H2O = ADP + phosphate + H(+). Its function is as follows. DNA helicase which participates in several chromatin remodeling complexes, including the SWR1 and the INO80 complexes. The SWR1 complex mediates the ATP-dependent exchange of histone H2A for the H2A variant HZT1 leading to transcriptional regulation of selected genes by chromatin remodeling. The INO80 complex remodels chromatin by shifting nucleosomes and is involved in DNA repair. Also involved in pre-rRNA processing. The sequence is that of RuvB-like helicase 1 (RBV1) from Debaryomyces hansenii (strain ATCC 36239 / CBS 767 / BCRC 21394 / JCM 1990 / NBRC 0083 / IGC 2968) (Yeast).